A 418-amino-acid chain; its full sequence is tRNA(Met) cytidine acetate ligase (418 aa).

ATP is bound by residues glycine 95, asparagine 161, and arginine 186.

It belongs to the TmcAL family.

Its subcellular location is the cytoplasm. It carries out the reaction cytidine(34) in elongator tRNA(Met) + acetate + ATP = N(4)-acetylcytidine(34) in elongator tRNA(Met) + AMP + diphosphate. Functionally, catalyzes the formation of N(4)-acetylcytidine (ac(4)C) at the wobble position of elongator tRNA(Met), using acetate and ATP as substrates. First activates an acetate ion to form acetyladenylate (Ac-AMP) and then transfers the acetyl group to tRNA to form ac(4)C34. The chain is tRNA(Met) cytidine acetate ligase from Thermotoga petrophila (strain ATCC BAA-488 / DSM 13995 / JCM 10881 / RKU-1).